A 112-amino-acid polypeptide reads, in one-letter code: M-myrmeciitoxin-Mp1 (112 aa).

A signal peptide spans 1–26 (MKLSCLLLTLTIIFVLTIVHAPNVEA). Residues 27–56 (KDLADPESEAVGFADAFGEADAVGEADPNA) constitute a propeptide that is removed on maturation. Positions 57 to 78 (GLGSVFGRLARILGRVIPKVAK) are critical for cytotoxic activity. Residues 93–106 (KEAIPMAVEMAKSQ) are igE-binding determinant.

This sequence belongs to the formicidae venom precursor-01 superfamily. Ant pilosulin family. In terms of tissue distribution, expressed by the venom gland.

Its subcellular location is the secreted. Its function is as follows. Has strong cytotoxic and hemolytic activities. Is more potent against mononuclear leukocytes than against granulocytes. The synthesized peptide 57-76 shows a potent and broad spectrum antimicrobial activity against both Gram-positive and Gram-negative bacteria, and also against the fungus C.albicans. Adopts an alpha-helical structure. The chain is M-myrmeciitoxin-Mp1 from Myrmecia pilosula (Jack jumper ant).